A 1693-amino-acid chain; its full sequence is Latrophilin Cirl (1693 aa).

At 1–753 (MLPTILSISY…LFTMFDGNMR (753 aa)) the chain is on the extracellular side. The region spanning 25–114 (ACEGKKLTIE…KYLEAHYQCI (90 aa)) is the SUEL-type lectin domain. An N-linked (GlcNAc...) asparagine glycan is attached at N142. Polar residues-rich tracts occupy residues 185 to 198 (TAVT…STTA) and 256 to 265 (NVTSPSNTRI). The disordered stretch occupies residues 185–299 (TAVTHSTPWS…PGTAASGSVA (115 aa)). N256 carries N-linked (GlcNAc...) asparagine glycosylation. Low complexity predominate over residues 275–299 (DDGTLLTTKSSPNRPPGTAASGSVA). N-linked (GlcNAc...) asparagine glycans are attached at residues N301, N340, N397, N641, N689, and N716. The disordered stretch occupies residues 375–399 (YDEYDDDASSTTPAPSGGDCLHNSS). A GAIN-B domain is found at 564-740 (KKSKIYSSVV…AILMDVVDEH (177 aa)). 2 cysteine pairs are disulfide-bonded: C695-C722 and C710-C724. Positions 695–740 (CVFWNYIDHAWSANGCSLESTNRTHSVCSCNHLTNFAILMDVVDEH) are GPS. Residues 754-774 (IFIYISIGICVVFIVIALLTL) traverse the membrane as a helical segment. Residues 775-787 (KLFNGVFVKSART) are Cytoplasmic-facing. A helical membrane pass occupies residues 788 to 808 (SIYTSIYLCLLAIELLFLLGI). At 809–814 (EQTETS) the chain is on the extracellular side. Residues 815-835 (IFCGFITIFLHCAILSGTAWF) traverse the membrane as a helical segment. Over 836-861 (CYEAFHSYSTLTSDELLLEVDQTPKV) the chain is Cytoplasmic. Residues 862-882 (NCYYLLSYGLSLSVVAISLVI) traverse the membrane as a helical segment. The Extracellular segment spans residues 883–906 (DPSTYTQNDYCVLMEANALFYATF). The helical transmembrane segment at 907–927 (VVPVLVFFVAAIGYTFLSWII) threads the bilayer. Topologically, residues 928–954 (MCRKSRTGLKTKEHTRLASVRFDIRCS) are cytoplasmic. The chain crosses the membrane as a helical span at residues 955–975 (FVFLLLLSAVWCSAYFYLRGA). The Extracellular portion of the chain corresponds to 976–985 (KMDDDTADVY). Residues 986–1006 (GYCFICFNTLLGLYIFVFHCI) form a helical membrane-spanning segment. At 1007–1693 (QNEKIRREYR…VRCYLEPLAK (687 aa)) the chain is on the cytoplasmic side. The residue at position 1142 (S1142) is a Phosphoserine. Disordered stretches follow at residues 1156 to 1194 (HKQQ…LKTP), 1220 to 1247 (KPNS…LHSR), 1294 to 1319 (QQQL…AEQH), 1433 to 1521 (GGGS…SDER), and 1601 to 1673 (LAVN…QQRH). A phosphoserine mark is found at S1239 and S1246. The segment covering 1294-1309 (QQQLRRQQLHQQQQQL) has biased composition (low complexity). 2 positions are modified to phosphoserine: S1310 and S1311. Residues 1439 to 1464 (GGSVSSRSQQQQLKKQQQQQSLAQQR) show a composition bias toward low complexity. Acidic residues-rich tracts occupy residues 1472 to 1486 (DDDD…EEAT) and 1496 to 1507 (CDEDEEEDESDL). Basic and acidic residues predominate over residues 1508–1521 (EHDAHGLPPQSDER). The segment covering 1630 to 1655 (LQKLSPQSTTSSSSHTSHSNPNLHPH) has biased composition (low complexity). Over residues 1656-1672 (QLTHPHPHQHPPHHQQR) the composition is skewed to basic residues.

This sequence belongs to the G-protein coupled receptor 2 family. LN-TM7 subfamily. Forms a heterodimer, consisting of a large extracellular region non-covalently linked to a seven-transmembrane moiety. Proteolytically cleaved into 2 subunits, an extracellular subunit and a seven-transmembrane subunit.

The protein resides in the cell membrane. The protein is Latrophilin Cirl of Drosophila sechellia (Fruit fly).